The primary structure comprises 259 residues: Deoxyribose-phosphate aldolase (259 aa).

D102 acts as the Proton donor/acceptor in catalysis. K167 functions as the Schiff-base intermediate with acetaldehyde in the catalytic mechanism. K201 serves as the catalytic Proton donor/acceptor.

It belongs to the DeoC/FbaB aldolase family. DeoC type 2 subfamily.

The protein localises to the cytoplasm. The enzyme catalyses 2-deoxy-D-ribose 5-phosphate = D-glyceraldehyde 3-phosphate + acetaldehyde. Its pathway is carbohydrate degradation; 2-deoxy-D-ribose 1-phosphate degradation; D-glyceraldehyde 3-phosphate and acetaldehyde from 2-deoxy-alpha-D-ribose 1-phosphate: step 2/2. In terms of biological role, catalyzes a reversible aldol reaction between acetaldehyde and D-glyceraldehyde 3-phosphate to generate 2-deoxy-D-ribose 5-phosphate. In Escherichia coli O1:K1 / APEC, this protein is Deoxyribose-phosphate aldolase.